Reading from the N-terminus, the 207-residue chain is Cilia- and flagella-associated protein 418 (207 aa).

Positions 1-75 (MAEDLDELLD…LINEILEEPN (75 aa)) are required for interaction with FAM161A. The disordered stretch occupies residues 26-52 (MVEQPKGCGGGTHSSDRNQAKAKETLR). The segment covering 39-52 (SSDRNQAKAKETLR) has biased composition (basic and acidic residues).

As to quaternary structure, interacts (via N-terminus) with FAM161A (via central region); the interaction is direct. As to expression, widely expressed, with highest levels in heart and brain. Also expressed in the retina (at protein level).

Its subcellular location is the cytoplasm. It localises to the photoreceptor inner segment. May be involved in photoreceptor outer segment disk morphogenesis. This is Cilia- and flagella-associated protein 418 from Homo sapiens (Human).